The sequence spans 774 residues: Effector protein hopW1-1 (774 aa).

Disordered stretches follow at residues 1–33 (MSPAQIIRTPHSFPPSFTGTSSSAENSHAQSPQ) and 301–340 (CQAGGNGQGQLEASSARPESLRYAPTRAASSGSEARVPGQ). Low complexity predominate over residues 9-23 (TPHSFPPSFTGTSSS). Polar residues predominate over residues 24–33 (AENSHAQSPQ).

Belongs to the HopW family. As to quaternary structure, interacts (via C-terminus) with Arabidopsis WIN1, WIN2 and WIN3.

The protein localises to the secreted. Its function is as follows. Induces hypersensitive response (HR). The polypeptide is Effector protein hopW1-1 (hopW1-1) (Pseudomonas syringae pv. maculicola).